A 488-amino-acid chain; its full sequence is 3-octaprenyl-4-hydroxybenzoate carboxy-lyase (488 aa).

Asn172 is a binding site for Mn(2+). Residues 175–177 (IYR), 189–191 (RWL), and 194–195 (RG) contribute to the prenylated FMN site. Glu238 lines the Mn(2+) pocket. Asp287 (proton donor) is an active-site residue.

Belongs to the UbiD family. In terms of assembly, homohexamer. Prenylated FMN serves as cofactor. The cofactor is Mn(2+).

The protein resides in the cell membrane. It carries out the reaction a 4-hydroxy-3-(all-trans-polyprenyl)benzoate + H(+) = a 2-(all-trans-polyprenyl)phenol + CO2. Its pathway is cofactor biosynthesis; ubiquinone biosynthesis. In terms of biological role, catalyzes the decarboxylation of 3-octaprenyl-4-hydroxy benzoate to 2-octaprenylphenol, an intermediate step in ubiquinone biosynthesis. In Pseudomonas paraeruginosa (strain DSM 24068 / PA7) (Pseudomonas aeruginosa (strain PA7)), this protein is 3-octaprenyl-4-hydroxybenzoate carboxy-lyase.